Reading from the N-terminus, the 283-residue chain is Pantothenate synthetase (283 aa).

An ATP-binding site is contributed by 34-41; the sequence is MGALHEGH. The active-site Proton donor is the histidine 41. Glutamine 65 provides a ligand contact to (R)-pantoate. Residue glutamine 65 coordinates beta-alanine. Residue 152 to 155 participates in ATP binding; that stretch reads GEKD. Glutamine 158 contributes to the (R)-pantoate binding site. Position 189-192 (189-192) interacts with ATP; that stretch reads MSSR.

The protein belongs to the pantothenate synthetase family. As to quaternary structure, homodimer.

The protein resides in the cytoplasm. It catalyses the reaction (R)-pantoate + beta-alanine + ATP = (R)-pantothenate + AMP + diphosphate + H(+). The protein operates within cofactor biosynthesis; (R)-pantothenate biosynthesis; (R)-pantothenate from (R)-pantoate and beta-alanine: step 1/1. Functionally, catalyzes the condensation of pantoate with beta-alanine in an ATP-dependent reaction via a pantoyl-adenylate intermediate. This chain is Pantothenate synthetase, found in Rhodopseudomonas palustris (strain BisA53).